A 343-amino-acid chain; its full sequence is UPF0324 membrane protein LJ_1117 (343 aa).

Helical transmembrane passes span 10–27 (FGLA…GIFL), 32–54 (YVNL…VLPV), 64–86 (IGFI…LNLT), 91–113 (AGIK…TYWL), 123–145 (LAVL…VSPQ), 157–179 (NEVL…EIVI), 219–241 (ALIM…GYWY), 262–284 (IPWF…FPPV), 288–310 (GLVQ…SVNF), and 317–339 (GGTV…IIMS).

It belongs to the UPF0324 family.

The protein localises to the cell membrane. The sequence is that of UPF0324 membrane protein LJ_1117 from Lactobacillus johnsonii (strain CNCM I-12250 / La1 / NCC 533).